Reading from the N-terminus, the 597-residue chain is MRISGVTLFRVSSQLRNVVNGQWTTTHYTVKDRSTDPRWKDVDLARESDVYDVVIVGGGPSGLSAAIRLRQLAEKAQKELRVCVVEKASVIGGHTLSGAVIETRALDELIPNWKELGAPVYQQVTSESIAILTESGRIPVPVLPGVPLANHGNYIVRLGKVVQWLGEQAEAAGVEVWPEIAASEVLYNEDGSVKGIATSDVGIGKDGAPKDGFARGMEFHAKCTIFAEGCRGHLSKQVLDKFDLRTHAMTYGIGLKELWEIDPAKHRPGYVEHTMGWPLNVDQYGGSFLYHIEDQGQPLVSVGFVVALDYANPNLNPYKEFQKYKTHPSISKQLEGGKRIGYGARALNEGGFQSIPKLHFPGGCLVGCSAGFLNVAKLKGTHNAMKSGMVAAESIFEDIQQKGEDVQTIDPATYDKNIRDTYVVKELKATRNIRPSFNTSLGYIGGLIYSGIFYVFGRGIEPWTLGHGKKDNEKLIPVKDAKEIDYPKPDGKLTFDLLTSVSLTGTNHTEDQPAHLTLKNDQVPLDVNLAVYGGPEARFCPAGVYEFVPSEADESKKRLQINAQNCIHCKTCDIKDPQQNINWVTPEGGGGPKYEGM.

53–67 (VVIVGGGPSGLSAAI) contacts FAD. Residues 91–112 (IGGHTLSGAVIETRALDELIPN) lie within the membrane without spanning it. Gly285 and Gly286 together coordinate a ubiquinone. The stretch at 409 to 426 (IDPATYDKNIRDTYVVKE) is an intramembrane region. The [4Fe-4S] cluster site is built by Cys540, Cys566, Cys569, and Cys572. In terms of domain architecture, 4Fe-4S ferredoxin-type spans 557 to 586 (KRLQINAQNCIHCKTCDIKDPQQNINWVTP).

This sequence belongs to the ETF-QO/FixC family. In terms of assembly, monomer. [4Fe-4S] cluster serves as cofactor. The cofactor is FAD.

It is found in the mitochondrion inner membrane. It carries out the reaction a ubiquinone + reduced [electron-transfer flavoprotein] = a ubiquinol + oxidized [electron-transfer flavoprotein] + H(+). Functionally, accepts electrons from ETF and reduces ubiquinone. In Caenorhabditis elegans, this protein is Electron transfer flavoprotein-ubiquinone oxidoreductase, mitochondrial (let-721).